Reading from the N-terminus, the 181-residue chain is Large ribosomal subunit protein uL6 (181 aa).

The protein belongs to the universal ribosomal protein uL6 family. Part of the 50S ribosomal subunit.

Its function is as follows. This protein binds to the 23S rRNA, and is important in its secondary structure. It is located near the subunit interface in the base of the L7/L12 stalk, and near the tRNA binding site of the peptidyltransferase center. The protein is Large ribosomal subunit protein uL6 of Synechococcus sp. (strain CC9605).